The chain runs to 859 residues: Leucine--tRNA ligase (859 aa).

The 'HIGH' region motif lies at 42–52 (PYPSGKLHMGH). The 'KMSKS' region signature appears at 618-622 (KMSKS). Lys-621 provides a ligand contact to ATP.

The protein belongs to the class-I aminoacyl-tRNA synthetase family.

It localises to the cytoplasm. The catalysed reaction is tRNA(Leu) + L-leucine + ATP = L-leucyl-tRNA(Leu) + AMP + diphosphate. The polypeptide is Leucine--tRNA ligase (Buchnera aphidicola subsp. Acyrthosiphon pisum (strain APS) (Acyrthosiphon pisum symbiotic bacterium)).